We begin with the raw amino-acid sequence, 352 residues long: Biotin synthase (352 aa).

The region spanning Asn-44–Lys-262 is the Radical SAM core domain. 3 residues coordinate [4Fe-4S] cluster: Cys-59, Cys-63, and Cys-66. Positions 103, 134, 194, and 266 each coordinate [2Fe-2S] cluster.

It belongs to the radical SAM superfamily. Biotin synthase family. Homodimer. The cofactor is [4Fe-4S] cluster. [2Fe-2S] cluster is required as a cofactor.

The catalysed reaction is (4R,5S)-dethiobiotin + (sulfur carrier)-SH + 2 reduced [2Fe-2S]-[ferredoxin] + 2 S-adenosyl-L-methionine = (sulfur carrier)-H + biotin + 2 5'-deoxyadenosine + 2 L-methionine + 2 oxidized [2Fe-2S]-[ferredoxin]. Its pathway is cofactor biosynthesis; biotin biosynthesis; biotin from 7,8-diaminononanoate: step 2/2. Functionally, catalyzes the conversion of dethiobiotin (DTB) to biotin by the insertion of a sulfur atom into dethiobiotin via a radical-based mechanism. In Pseudomonas entomophila (strain L48), this protein is Biotin synthase.